We begin with the raw amino-acid sequence, 267 residues long: Putative carboxymethylenebutenolidase (267 aa).

Active-site residues include Cys-137, Asp-194, and His-226.

It belongs to the dienelactone hydrolase family.

It carries out the reaction 2-(5-oxo-2,5-dihydrofuran-2-ylidene)acetate + H2O = 4-oxohex-2-enedioate + H(+). This is Putative carboxymethylenebutenolidase from Yersinia pestis.